The chain runs to 1465 residues: DNA polymerase III PolC-type (1465 aa).

An Exonuclease domain is found at 427–583 (YVVFDVETTG…YDAEATGRLL (157 aa)).

This sequence belongs to the DNA polymerase type-C family. PolC subfamily.

The protein resides in the cytoplasm. It catalyses the reaction DNA(n) + a 2'-deoxyribonucleoside 5'-triphosphate = DNA(n+1) + diphosphate. Its function is as follows. Required for replicative DNA synthesis. This DNA polymerase also exhibits 3' to 5' exonuclease activity. The polypeptide is DNA polymerase III PolC-type (Streptococcus pyogenes serotype M4 (strain MGAS10750)).